The primary structure comprises 104 residues: Transcription factor S (104 aa).

Positions 4, 7, 20, 22, 65, 68, 93, and 96 each coordinate Zn(2+). The segment at 4 to 22 (CPKCGAVMFPSEGKFKCQC) adopts a C4-type zinc-finger fold. A TFIIS-type zinc finger spans residues 61–101 (TRVECPKCGNMEAFWWLQQTRRADESETRFFRCTRCKHTWR).

It belongs to the archaeal RpoM/eukaryotic RPA12/RPB9/RPC11 RNA polymerase family.

In terms of biological role, induces RNA cleavage activity in the RNA polymerase. In its presence, the cleavage activity of the RNA polymerase truncates the RNA back to position +15 in a stepwise manner by releasing mainly dinucleotides from the 3'-end of the nascent RNA. The truncated RNAs are able to continue elongation. Involved in transcriptional proofreading and fidelity. Misincorporation of nucleotides during elongation of transcription leads to arrested elongation complexes which are rescued by TFS-promoted removal of a dinucleotide from the 3'-end. TFS is able to induce a cleavage resynthesis cycle in stalled elongation complexes (resulting from the next missing nucleotide or a reduced incorporation rate of a wrong nucleotide) preventing misincorporation and enabling proofreading in a post-incorporation manner. Pausing of elongation complexes is the main determinant of TFS-induced RNA cleavage. The sequence is that of Transcription factor S from Methanothermobacter thermautotrophicus (strain ATCC 29096 / DSM 1053 / JCM 10044 / NBRC 100330 / Delta H) (Methanobacterium thermoautotrophicum).